The sequence spans 405 residues: Phosphoglycerate kinase (405 aa).

Residues 24 to 26 (DFN), R40, 63 to 66 (HLGR), R122, and R162 contribute to the substrate site. Residues K212, E331, and 361–364 (GGDS) contribute to the ATP site.

This sequence belongs to the phosphoglycerate kinase family. As to quaternary structure, monomer.

The protein resides in the cytoplasm. The enzyme catalyses (2R)-3-phosphoglycerate + ATP = (2R)-3-phospho-glyceroyl phosphate + ADP. It participates in carbohydrate degradation; glycolysis; pyruvate from D-glyceraldehyde 3-phosphate: step 2/5. The protein is Phosphoglycerate kinase of Corynebacterium efficiens (strain DSM 44549 / YS-314 / AJ 12310 / JCM 11189 / NBRC 100395).